Here is a 141-residue protein sequence, read N- to C-terminus: Putative nickel-responsive regulator (141 aa).

The Ni(2+) site is built by His-80, His-91, His-93, and Cys-99.

The protein belongs to the transcriptional regulatory CopG/NikR family. It depends on Ni(2+) as a cofactor.

Functionally, transcriptional regulator. In Methanococcus maripaludis (strain C7 / ATCC BAA-1331), this protein is Putative nickel-responsive regulator.